Reading from the N-terminus, the 693-residue chain is UvrABC system protein C (693 aa).

Residues 16–95 enclose the GIY-YIG domain; it reads DAPGVYRFRD…IKEFDPRFNV (80 aa). The 36-residue stretch at 208 to 243 folds into the UVR domain; that stretch reads GVFLRRLESEMAAASAELDFERAARVRDDINALRRV. A disordered region spans residues 656–693; it reads APSPDDATTEPGAVGEPGTADGAAADPDGRDAVVVPEG. Low complexity predominate over residues 672 to 693; sequence PGTADGAAADPDGRDAVVVPEG.

It belongs to the UvrC family. In terms of assembly, interacts with UvrB in an incision complex.

It localises to the cytoplasm. Its function is as follows. The UvrABC repair system catalyzes the recognition and processing of DNA lesions. UvrC both incises the 5' and 3' sides of the lesion. The N-terminal half is responsible for the 3' incision and the C-terminal half is responsible for the 5' incision. The polypeptide is UvrABC system protein C (Beutenbergia cavernae (strain ATCC BAA-8 / DSM 12333 / CCUG 43141 / JCM 11478 / NBRC 16432 / NCIMB 13614 / HKI 0122)).